The sequence spans 179 residues: Large ribosomal subunit protein uL5 (179 aa).

It belongs to the universal ribosomal protein uL5 family. As to quaternary structure, part of the 50S ribosomal subunit; part of the 5S rRNA/L5/L18/L25 subcomplex. Contacts the 5S rRNA and the P site tRNA. Forms a bridge to the 30S subunit in the 70S ribosome.

Its function is as follows. This is one of the proteins that bind and probably mediate the attachment of the 5S RNA into the large ribosomal subunit, where it forms part of the central protuberance. In the 70S ribosome it contacts protein S13 of the 30S subunit (bridge B1b), connecting the 2 subunits; this bridge is implicated in subunit movement. Contacts the P site tRNA; the 5S rRNA and some of its associated proteins might help stabilize positioning of ribosome-bound tRNAs. This chain is Large ribosomal subunit protein uL5, found in Nitrosomonas europaea (strain ATCC 19718 / CIP 103999 / KCTC 2705 / NBRC 14298).